The chain runs to 291 residues: Small ribosomal subunit biogenesis GTPase RsgA (291 aa).

Positions 63–221 (KNELKRPPVS…IADTPGFSAL (159 aa)) constitute a CP-type G domain. Residues 112-115 (TKKD) and 164-172 (GQSGVGKST) contribute to the GTP site. Positions 245, 250, 252, and 258 each coordinate Zn(2+).

This sequence belongs to the TRAFAC class YlqF/YawG GTPase family. RsgA subfamily. Monomer. Associates with 30S ribosomal subunit, binds 16S rRNA. Requires Zn(2+) as cofactor.

The protein resides in the cytoplasm. One of several proteins that assist in the late maturation steps of the functional core of the 30S ribosomal subunit. Helps release RbfA from mature subunits. May play a role in the assembly of ribosomal proteins into the subunit. Circularly permuted GTPase that catalyzes slow GTP hydrolysis, GTPase activity is stimulated by the 30S ribosomal subunit. This chain is Small ribosomal subunit biogenesis GTPase RsgA, found in Staphylococcus aureus (strain MRSA252).